The sequence spans 214 residues: Adenylate kinase (214 aa).

10-15 contributes to the ATP binding site; that stretch reads GAGKGT. The tract at residues 30–59 is NMP; sequence STGDMLRAAIKAGTELGKQAKAVIDAGQLV. AMP is bound by residues threonine 31, arginine 36, 57–59, 85–88, and glutamine 92; these read QLV and GFPR. The segment at 122-159 is LID; the sequence is GRRAHLPSGRTYHVVYNPPKVEGKDDVTGEDLVVRDDD. Residues arginine 123 and 132 to 133 contribute to the ATP site; that span reads TY. AMP-binding residues include arginine 156 and arginine 167. Lysine 200 contributes to the ATP binding site.

This sequence belongs to the adenylate kinase family. Monomer.

It localises to the cytoplasm. The catalysed reaction is AMP + ATP = 2 ADP. Its pathway is purine metabolism; AMP biosynthesis via salvage pathway; AMP from ADP: step 1/1. Catalyzes the reversible transfer of the terminal phosphate group between ATP and AMP. Plays an important role in cellular energy homeostasis and in adenine nucleotide metabolism. In Vibrio vulnificus (strain CMCP6), this protein is Adenylate kinase.